Here is an 84-residue protein sequence, read N- to C-terminus: Delta-conotoxin-like MVIA (84 aa).

Positions 1–22 (MKLTCVMIVAVLFLTTWTFVTA) are cleaved as a signal peptide. Residues 23-49 (DDSRYGLKNLFPKARHEMKNPEASKLN) constitute a propeptide that is removed on maturation. 3 disulfides stabilise this stretch: Cys54-Cys69, Cys61-Cys73, and Cys68-Cys77. Residue Pro65 is modified to 4-hydroxyproline. Serine amide is present on Ser83.

This sequence belongs to the conotoxin O1 superfamily. As to expression, expressed by the venom duct.

The protein resides in the secreted. In terms of biological role, delta-conotoxins bind to site 6 of voltage-gated sodium channels (Nav) and inhibit the inactivation process. This is Delta-conotoxin-like MVIA from Conus magus (Magical cone).